The chain runs to 178 residues: Cytochrome b6-f complex iron-sulfur subunit (178 aa).

Residues 20-42 traverse the membrane as a helical segment; the sequence is LLTFGSVTGVALGALYPVVNYFI. One can recognise a Rieske domain in the interval 71 to 161; sequence THPAGDRSLV…VSVENDNVFV (91 aa). [2Fe-2S] cluster is bound by residues Cys107, His109, Cys125, and His128. Cys112 and Cys127 are disulfide-bonded.

It belongs to the Rieske iron-sulfur protein family. In terms of assembly, the 4 large subunits of the cytochrome b6-f complex are cytochrome b6, subunit IV (17 kDa polypeptide, PetD), cytochrome f and the Rieske protein, while the 4 small subunits are PetG, PetL, PetM and PetN. The complex functions as a dimer. [2Fe-2S] cluster serves as cofactor.

The protein localises to the cellular thylakoid membrane. The enzyme catalyses 2 oxidized [plastocyanin] + a plastoquinol + 2 H(+)(in) = 2 reduced [plastocyanin] + a plastoquinone + 4 H(+)(out). Its function is as follows. Component of the cytochrome b6-f complex, which mediates electron transfer between photosystem II (PSII) and photosystem I (PSI), cyclic electron flow around PSI, and state transitions. The chain is Cytochrome b6-f complex iron-sulfur subunit from Synechococcus sp. (strain WH7803).